Consider the following 380-residue polypeptide: 2-aminoethylphosphonate--pyruvate transaminase (380 aa).

N6-(pyridoxal phosphate)lysine is present on lysine 204.

Belongs to the class-V pyridoxal-phosphate-dependent aminotransferase family. PhnW subfamily. In terms of assembly, homodimer. The cofactor is pyridoxal 5'-phosphate.

It catalyses the reaction (2-aminoethyl)phosphonate + pyruvate = phosphonoacetaldehyde + L-alanine. Involved in phosphonate degradation. In Aeromonas hydrophila subsp. hydrophila (strain ATCC 7966 / DSM 30187 / BCRC 13018 / CCUG 14551 / JCM 1027 / KCTC 2358 / NCIMB 9240 / NCTC 8049), this protein is 2-aminoethylphosphonate--pyruvate transaminase.